Consider the following 133-residue polypeptide: Pheromone-regulated membrane protein 3 (133 aa).

Residues 1 to 104 lie on the Nuclear side of the membrane; the sequence is MTAMKEDNAA…SKVQRENKGS (104 aa). Residues 36-100 are disordered; that stretch reads ADGFVINKAK…DASESKVQRE (65 aa). The short motif at 69-75 is the Bipartite nuclear localization signal element; the sequence is GRVRKHK. Residues 90-100 show a composition bias toward basic and acidic residues; it reads KDASESKVQRE. Residues 105 to 127 form a helical membrane-spanning segment; the sequence is FYQGAIFGSFLGAAVTTVLSNLA. Residues 128–133 are Perinuclear space-facing; it reads VKALQN.

In terms of assembly, interacts with KAR5.

Its subcellular location is the nucleus outer membrane. It is found in the cytoplasm. The protein resides in the cytoskeleton. It localises to the microtubule organizing center. The protein localises to the spindle pole body. Required for the fusion of nuclear envelopes during mating, ensuring proper karyogamy. Plays a role in the initiation of outer nuclear envelope fusion. The polypeptide is Pheromone-regulated membrane protein 3 (PRM3) (Saccharomyces cerevisiae (strain ATCC 204508 / S288c) (Baker's yeast)).